A 239-amino-acid polypeptide reads, in one-letter code: Transcriptional regulatory protein BtsR (239 aa).

One can recognise a Response regulatory domain in the interval Lys-3–Arg-116. A 4-aspartylphosphate modification is found at Asp-54. Positions Ile-137 to Leu-239 constitute an HTH LytTR-type domain.

Post-translationally, phosphorylated by BtsS.

Its function is as follows. Member of the two-component regulatory system BtsS/BtsR. BtsR regulates expression of btsT by binding to its promoter region. This is Transcriptional regulatory protein BtsR from Escherichia coli O6:H1 (strain CFT073 / ATCC 700928 / UPEC).